Reading from the N-terminus, the 247-residue chain is Cell division protein ZapD (247 aa).

Belongs to the ZapD family. As to quaternary structure, interacts with FtsZ.

The protein resides in the cytoplasm. In terms of biological role, cell division factor that enhances FtsZ-ring assembly. Directly interacts with FtsZ and promotes bundling of FtsZ protofilaments, with a reduction in FtsZ GTPase activity. The sequence is that of Cell division protein ZapD from Escherichia fergusonii (strain ATCC 35469 / DSM 13698 / CCUG 18766 / IAM 14443 / JCM 21226 / LMG 7866 / NBRC 102419 / NCTC 12128 / CDC 0568-73).